Reading from the N-terminus, the 89-residue chain is Acylphosphatase (89 aa).

The Acylphosphatase-like domain maps to 3-89 (RKEFLVSGRV…DTREKRFSTY (87 aa)). Catalysis depends on residues Arg-18 and Asn-36.

The protein belongs to the acylphosphatase family.

It catalyses the reaction an acyl phosphate + H2O = a carboxylate + phosphate + H(+). In Clostridium perfringens (strain ATCC 13124 / DSM 756 / JCM 1290 / NCIMB 6125 / NCTC 8237 / Type A), this protein is Acylphosphatase (acyP).